The chain runs to 398 residues: MGVLSAADPPPVSAIGFEGYEKRLEITFSEAPVFADPDGRGLRALSRAQIDSVLDLARCTIVSELSNKDFDSYVLSESSLFIYSDKIVIKTCGTTKLLLTIPRILELAEGLSMPLAAVKYSRGMFIFPSAQPAPHRSFSEEVAVLNRYFGHLKSGGNAYVIGDPAKPGQKWHIYYATQHPEQPMVTLEMCMTGLDKEKASVFFKTSADGHTSCAKEMTKLSGISDIIPEMEICDFDFEPCGYSMNAIHGLAFSTIHVTPEDGFSYASYEVVGFDASTLAYGDLVKRVLRCFGPSEFSVAVTIFGGHGHAGTWAKELNADAYKCNNMVEQELPCGGLLIYQSFDATEDVPVAVGSPKSVLHCFEAENMVNPAPVKEGKLGNLLPWGEDALEENDGVFDE.

Catalysis depends on residues Glu18 and Glu21. Ser78 functions as the Schiff-base intermediate with substrate; via pyruvic acid in the catalytic mechanism. A Pyruvic acid (Ser); by autocatalysis modification is found at Ser78. Cys92 acts as the Proton donor; for catalytic activity in catalysis. Active-site proton acceptor; for processing activity residues include Ser243 and His256.

Belongs to the eukaryotic AdoMetDC family. Pyruvate is required as a cofactor. In terms of processing, is synthesized initially as an inactive proenzyme. Formation of the active enzyme involves a self-maturation process in which the active site pyruvoyl group is generated from an internal serine residue via an autocatalytic post-translational modification. Two non-identical subunits are generated from the proenzyme in this reaction, and the pyruvate is formed at the N-terminus of the alpha chain, which is derived from the carboxyl end of the proenzyme. The post-translation cleavage follows an unusual pathway, termed non-hydrolytic serinolysis, in which the side chain hydroxyl group of the serine supplies its oxygen atom to form the C-terminus of the beta chain, while the remainder of the serine residue undergoes an oxidative deamination to produce ammonia and the pyruvoyl group blocking the N-terminus of the alpha chain.

The enzyme catalyses S-adenosyl-L-methionine + H(+) = S-adenosyl 3-(methylsulfanyl)propylamine + CO2. Its pathway is amine and polyamine biosynthesis; S-adenosylmethioninamine biosynthesis; S-adenosylmethioninamine from S-adenosyl-L-methionine: step 1/1. The polypeptide is S-adenosylmethionine decarboxylase proenzyme (SAMDC) (Oryza sativa subsp. indica (Rice)).